We begin with the raw amino-acid sequence, 367 residues long: MSLRRIMVTAVRNLHPVTLLPSPRINILYGANGSGKTSVLEAVHLLGLARSFRSTRLNPVIQYEQAACTVFGEVQLTEGGTSNLGVSRERQGEFTIRIDGQNARSAAQLAELLPLQLINPDSFRLLEGAPKIRRQFLDWGVFHVEPRFLPAWQRLQKALRQRNSWLRHGTLDPASQAAWDRELCLASAEIDEYRRNYIKALKPVFERTLSELVELDGLTLSYYRGWDKDRELQEVLASSLLRDQQMGHTQAGPQRADLRLRLAGNNAADILSRGQQKLVVCALRIAQGHLVSQARRGHCIYLVDDLPSELDDQHRRALCRLLEELRCQVFITCVDHELLREGWQTETPVALFHVEQGRITQTHDHRE.

30–37 provides a ligand contact to ATP; the sequence is GANGSGKT.

Belongs to the RecF family.

The protein resides in the cytoplasm. Functionally, the RecF protein is involved in DNA metabolism; it is required for DNA replication and normal SOS inducibility. RecF binds preferentially to single-stranded, linear DNA. It also seems to bind ATP. The protein is DNA replication and repair protein RecF of Pseudomonas putida (strain ATCC 47054 / DSM 6125 / CFBP 8728 / NCIMB 11950 / KT2440).